A 382-amino-acid chain; its full sequence is Low-specificity L-threonine aldolase (382 aa).

Lys-214 carries the post-translational modification N6-(pyridoxal phosphate)lysine.

Belongs to the threonine aldolase family. Homotetramer. Requires pyridoxal 5'-phosphate as cofactor.

It carries out the reaction L-threonine = acetaldehyde + glycine. The catalysed reaction is L-allo-threonine = acetaldehyde + glycine. It functions in the pathway amino-acid degradation; L-threonine degradation via aldolase pathway; acetaldehyde and glycine from L-threonine: step 1/1. This Eremothecium gossypii (strain ATCC 10895 / CBS 109.51 / FGSC 9923 / NRRL Y-1056) (Yeast) protein is Low-specificity L-threonine aldolase (GLY1).